The primary structure comprises 696 residues: Elongation factor G (696 aa).

One can recognise a tr-type G domain in the interval 8-288; the sequence is EDYRNFGIMA…AVVDFLPSPI (281 aa). GTP is bound by residues 17-24, 86-90, and 140-143; these read AHIDAGKT, DTPGH, and NKMD.

This sequence belongs to the TRAFAC class translation factor GTPase superfamily. Classic translation factor GTPase family. EF-G/EF-2 subfamily.

The protein localises to the cytoplasm. In terms of biological role, catalyzes the GTP-dependent ribosomal translocation step during translation elongation. During this step, the ribosome changes from the pre-translocational (PRE) to the post-translocational (POST) state as the newly formed A-site-bound peptidyl-tRNA and P-site-bound deacylated tRNA move to the P and E sites, respectively. Catalyzes the coordinated movement of the two tRNA molecules, the mRNA and conformational changes in the ribosome. The polypeptide is Elongation factor G (Chelativorans sp. (strain BNC1)).